Here is a 300-residue protein sequence, read N- to C-terminus: Nucleotide-binding protein Dshi_0209 (300 aa).

Position 20–27 (20–27 (GPSGAGRT)) interacts with ATP. 67–70 (DART) contributes to the GTP binding site.

It belongs to the RapZ-like family.

Displays ATPase and GTPase activities. This chain is Nucleotide-binding protein Dshi_0209, found in Dinoroseobacter shibae (strain DSM 16493 / NCIMB 14021 / DFL 12).